The sequence spans 470 residues: PTS system trehalose-specific EIIBC component (470 aa).

The 88-residue stretch at 1-88 (MGELNKSARQ…VKETGIGEST (88 aa)) folds into the PTS EIIB type-1 domain. Cys-27 acts as the Phosphocysteine intermediate; for EIIB activity in catalysis. Cys-27 bears the Phosphocysteine; by EIIA mark. One can recognise a PTS EIIC type-1 domain in the interval 108–470 (KTLADIFIPI…TYAYARFKHK (363 aa)). 10 helical membrane passes run 110-130 (LADIFIPILPAIVTAGLLMGI), 160-180 (INLIAGTAFTFLPALIGWSAV), 183-203 (FGGNPLLGIVLGVMLVHPDLL), 234-254 (GQVLPILLASYMLAKIEVFLT), 263-283 (LLVVAPITLLLTGFASFIIIG), 301-321 (FGSFAALGGLLYGGFYSALVI), 326-346 (HTFLAVDLQLIGSKLGGTFLW), 347-367 (PMLALSNIAQGSAALAMMFIV), 403-423 (FIIAMVSSGLAGMYISSQGVL), and 443-463 (WGAFAIGMAIVLIVPFAGTYA).

Its subcellular location is the cell membrane. It carries out the reaction alpha,alpha-trehalose(out) + N(pros)-phospho-L-histidyl-[protein] = alpha,alpha-trehalose 6-phosphate(in) + L-histidyl-[protein]. The phosphoenolpyruvate-dependent sugar phosphotransferase system (sugar PTS), a major carbohydrate active transport system, catalyzes the phosphorylation of incoming sugar substrates concomitantly with their translocation across the cell membrane. This system is involved in trehalose transport. This Bacillus subtilis (strain 168) protein is PTS system trehalose-specific EIIBC component (treP).